We begin with the raw amino-acid sequence, 430 residues long: MGMLIKNGNVVMVEDGKIRKMDVLIDKGIIVEISPEINRSDVEVIDIEGKFLIPGLIDMHVHFRDPGYTHKEDIHSGSNAALAGGFTGVLMMPNTDPPPDNATVIYYWKEKSKSIPLNILFSGCITKNRAGKELSKFYELKEAGAVAITDDGNWVADGAVFRHAMEYAAALDLLVITHPEEPTIANRGVINEGYWSTVLGLRGIPKAAENIAIYRDIEIAKMTGAKLHVAHLSTAEGVRLVAAAKKLGLKVTAEVTPHHLVLTDEALAGYDTNLKVNPPLREAEEQKALLKGLLEGVIDVIATDHAPHASYEKNVEFNDAPFGIEGLETAFPVLYTELVLKKKITLEKLLLKMTVNPAKILQLPKQGDIKKGNYANLTVIDPKLTLKVSEELLVGKSKNNPFLGRTLTGWPVMTVYQGIVAYQRLLKGVQ.

Positions 60 and 62 each coordinate Zn(2+). Substrate-binding positions include 62–64 and Asn-94; that span reads HFR. Residues Asp-151, His-178, and His-231 each coordinate Zn(2+). Asn-277 is a substrate binding site. Asp-304 lines the Zn(2+) pocket. Asp-304 is a catalytic residue. Residues His-308 and 322 to 323 each bind substrate; that span reads FG.

This sequence belongs to the metallo-dependent hydrolases superfamily. DHOase family. Class I DHOase subfamily. It depends on Zn(2+) as a cofactor.

It catalyses the reaction (S)-dihydroorotate + H2O = N-carbamoyl-L-aspartate + H(+). The protein operates within pyrimidine metabolism; UMP biosynthesis via de novo pathway; (S)-dihydroorotate from bicarbonate: step 3/3. In terms of biological role, catalyzes the reversible cyclization of carbamoyl aspartate to dihydroorotate. The chain is Dihydroorotase from Carboxydothermus hydrogenoformans (strain ATCC BAA-161 / DSM 6008 / Z-2901).